Here is a 475-residue protein sequence, read N- to C-terminus: Sulfate adenylyltransferase subunit 1 (475 aa).

A tr-type G domain is found at 25-239 (KSLLRFLTCG…EVLETVEIQR (215 aa)). Residues 34–41 (GSVDDGKS) form a G1 region. 34 to 41 (GSVDDGKS) provides a ligand contact to GTP. The segment at 92–96 (GITID) is G2. The segment at 113–116 (DTPG) is G3. GTP is bound by residues 113–117 (DTPGH) and 168–171 (NKMD). Positions 168–171 (NKMD) are G4. A G5 region spans residues 206–208 (SAL).

This sequence belongs to the TRAFAC class translation factor GTPase superfamily. Classic translation factor GTPase family. CysN/NodQ subfamily. Heterodimer composed of CysD, the smaller subunit, and CysN.

It carries out the reaction sulfate + ATP + H(+) = adenosine 5'-phosphosulfate + diphosphate. It functions in the pathway sulfur metabolism; hydrogen sulfide biosynthesis; sulfite from sulfate: step 1/3. With CysD forms the ATP sulfurylase (ATPS) that catalyzes the adenylation of sulfate producing adenosine 5'-phosphosulfate (APS) and diphosphate, the first enzymatic step in sulfur assimilation pathway. APS synthesis involves the formation of a high-energy phosphoric-sulfuric acid anhydride bond driven by GTP hydrolysis by CysN coupled to ATP hydrolysis by CysD. This Escherichia coli (strain SE11) protein is Sulfate adenylyltransferase subunit 1.